We begin with the raw amino-acid sequence, 215 residues long: Pyrrolidone-carboxylate peptidase (215 aa).

Residues Glu-80, Cys-143, and His-167 contribute to the active site.

It belongs to the peptidase C15 family. In terms of assembly, homotetramer.

It is found in the cytoplasm. It catalyses the reaction Release of an N-terminal pyroglutamyl group from a polypeptide, the second amino acid generally not being Pro.. Functionally, removes 5-oxoproline from various penultimate amino acid residues except L-proline. In Brevibacillus brevis (strain 47 / JCM 6285 / NBRC 100599), this protein is Pyrrolidone-carboxylate peptidase.